Here is a 207-residue protein sequence, read N- to C-terminus: MAKTYDYLFKLLLIGDSGVGKTCLLFRFSEDAFNTTFISTIGIDFKIRTIELDGKKIKLQIWDTAGQERFRTITTAYYRGAMGIMLVYDITNEKSFDNIKNWIRNIEEHASSDVERMILGNKCDMNDKRQVSKERGEKLAIDYGIKFLETSAKSSANVEEAFFTLARDIMTKLNRKMNDSNSAGAGGPVKITENRSKKTSFFRCSLL.

GTP-binding residues include S17, G18, V19, G20, K21, T22, C23, T35, S39, and T40. Position 22 (T22) interacts with Mg(2+). 2 consecutive short sequence motifs (switch) follow at residues D31–F45 and D63–G80. T40 and D63 together coordinate Mg(2+). G66 contacts GTP. A Phosphothreonine; by LRRK2 modification is found at T72. Residues N121, K122, D124, A152, and K153 each coordinate GTP. S180 carries the post-translational modification Phosphoserine. C204 is subject to Cysteine methyl ester. C204 is lipidated: S-geranylgeranyl cysteine. Residues S205–L207 constitute a propeptide, removed in mature form.

This sequence belongs to the small GTPase superfamily. Rab family. As to quaternary structure, associated with actin, delta-catenin and alpha and beta tubulins. Interacts with OTOF. Interacts with PEX5R. Interacts with RAB3IP. Interacts with VIM. Interacts with CDH1. Interacts with MICALL2. Interacts with GDI1, GDI2, CHML and CHM; phosphorylation at Thr-72 disrupts these interactions. Interacts with MICAL1. The cofactor is Mg(2+). In terms of processing, phosphorylation of Thr-72 in the switch II region by LRRK2 prevents the association of RAB regulatory proteins, including CHM, CHML and RAB GDP dissociation inhibitors GDI1 and GDI2.

Its subcellular location is the cell membrane. The protein localises to the cytoplasmic vesicle. The protein resides in the phagosome. It localises to the phagosome membrane. It is found in the endosome membrane. The enzyme catalyses GTP + H2O = GDP + phosphate + H(+). Regulated by guanine nucleotide exchange factors (GEFs) including RAB3IP/RABIN8 which promotes the exchange of bound GDP for free GTP. Regulated by GTPase activating proteins (GAPs) which increase the GTP hydrolysis activity. Inhibited by GDP dissociation inhibitors (GDIs). The small GTPases Rab are key regulators of intracellular membrane trafficking, from the formation of transport vesicles to their fusion with membranes. Rabs cycle between an inactive GDP-bound form and an active GTP-bound form that is able to recruit to membranes different sets of downstream effectors directly responsible for vesicle formation, movement, tethering and fusion. RAB8B may be involved in polarized vesicular trafficking and neurotransmitter release. May participate in cell junction dynamics in Sertoli cells. May also participate in the export of a subset of neosynthesized proteins through a Rab8-Rab10-Rab11-dependent endososomal export route. The polypeptide is Ras-related protein Rab-8B (Homo sapiens (Human)).